Consider the following 192-residue polypeptide: Elongation factor P (192 aa).

This sequence belongs to the elongation factor P family.

The protein resides in the cytoplasm. Its pathway is protein biosynthesis; polypeptide chain elongation. Functionally, involved in peptide bond synthesis. Stimulates efficient translation and peptide-bond synthesis on native or reconstituted 70S ribosomes in vitro. Probably functions indirectly by altering the affinity of the ribosome for aminoacyl-tRNA, thus increasing their reactivity as acceptors for peptidyl transferase. In Borreliella afzelii (strain PKo) (Borrelia afzelii), this protein is Elongation factor P.